The sequence spans 328 residues: Alanine racemase (328 aa).

The active-site Proton acceptor; specific for D-alanine is Lys33. Lys33 is modified (N6-(pyridoxal phosphate)lysine). Arg118 is a substrate binding site. The Proton acceptor; specific for L-alanine role is filled by Tyr237. A substrate-binding site is contributed by Met283.

The protein belongs to the alanine racemase family. Requires pyridoxal 5'-phosphate as cofactor.

The catalysed reaction is L-alanine = D-alanine. The protein operates within amino-acid biosynthesis; D-alanine biosynthesis; D-alanine from L-alanine: step 1/1. Its function is as follows. Catalyzes the interconversion of L-alanine and D-alanine. May also act on other amino acids. The chain is Alanine racemase (alr) from Campylobacter jejuni subsp. jejuni serotype O:23/36 (strain 81-176).